The chain runs to 139 residues: Non-structural protein 1 (139 aa).

A DLNP; interaction with MAP1B motif is present at residues 136–139 (DLNP).

The protein belongs to the pneumovirus non-structural protein 1 family. As to quaternary structure, monomer. Homomultimer. Heteromultimer with NS2. Interacts with the matrix protein M. Interacts with host ELOC and CUL2; this interaction allows NS1 to form an active E3 ligase with ELOC and CUL2. Interacts with host IRF3; this interaction leads to the disrupted association of IRF3 with CREBBP and thus reduced binding of IRF3 to the IFN-beta promoter. Interacts with host MAVS; this interaction prevents MAVS binding to RIGI and inhibits signaling pathway leading to interferon production. Interacts with host MAP1B/microtubule-associated protein 1B. Interacts with host TRIM25 (via SPRY domain); this interaction suppresses RIGI ubiquitination and results in decreased interaction between RIGI and MAVS.

The protein resides in the host cytoplasm. Its subcellular location is the host mitochondrion. It localises to the host nucleus. Functionally, plays a major role in antagonizing the type I IFN-mediated antiviral response by degrading or inhibiting multiple cellular factors required for either IFN induction or response pathways. Acts cooperatively with NS2 to repress activation and nuclear translocation of host IFN-regulatory factor IRF3. Also disrupts the association of IRF3 with CREBBP. Interacts with host mitochondrial-associated membrane (MAM) MAVS and prevents the interaction with RIGI. Interacts with TRIM25 to suppress TRIM25-mediated RIGI ubiquitination and thereby RIGI-MAVS interaction. Together with NS2, participates in the proteasomal degradation of host STAT2, IRF3, IRF7, TBK1 and RIGI through a NS-degradasome involving CUL2 and Elongin-C. The degradasome requires an intact mitochondrial MAVS. Decreases the levels of host TRAF3 and IKBKE/IKK-epsilon. As functions other than disruptions of the type I IFN-mediated antiviral signaling pathways, induces host SOCS1 and SOCS3 expression. Suppresses premature apoptosis by an NF-kappa-B-dependent, interferon-independent mechanism and thus facilitates virus growth. Additionally, NS1 may serve some inhibitory role in viral transcription and RNA replication. Suppresses proliferation and activation of host CD103+ CD8+ cytotoxic T-lymphocytes and Th17 helper T-lymphocytes. The polypeptide is Non-structural protein 1 (1C) (Homo sapiens (Human)).